Reading from the N-terminus, the 102-residue chain is Acid shock protein (102 aa).

The N-terminal stretch at 1 to 21 is a signal peptide; sequence MKKVLALVVAAAMGLSSAAFA. Low complexity predominate over residues 22 to 41; that stretch reads AETATTPAPTATTTKAAPAK. A propeptide spanning residues 22-58 is cleaved from the precursor; sequence AETATTPAPTATTTKAAPAKTTHHKKQHKAAPAQKAQ. A disordered region spans residues 22-102; the sequence is AETATTPAPT…PAKPAAQPAA (81 aa). Residues 80–90 are compositionally biased toward basic residues; sequence AAKKHAKKHSH. Over residues 91 to 102 the composition is skewed to low complexity; sequence QQPAKPAAQPAA.

Belongs to the Asr family. Proteolytic processing gives rise to the active protein.

Its subcellular location is the periplasm. Required for growth and/or survival at acidic conditions. This is Acid shock protein from Escherichia coli O45:K1 (strain S88 / ExPEC).